The sequence spans 448 residues: Methionine aminopeptidase 2 (448 aa).

Residues 1–17 show a composition bias toward low complexity; it reads MPATAEAADAATQATDA. A disordered region spans residues 1–87; it reads MPATAEAADA…QTEPPSIGLT (87 aa). Over residues 21 to 34 the composition is skewed to basic and acidic residues; the sequence is KLEENKLPEGQERG. Acidic residues predominate over residues 35-46; it reads PEEEEDDDDDET. A compositionally biased stretch (basic residues) spans 55 to 71; that stretch reads KKKKKKKSGAKKKKSKT. Residue histidine 200 participates in substrate binding. Residues aspartate 220, aspartate 231, and histidine 300 each contribute to the a divalent metal cation site. Residue histidine 308 participates in substrate binding. Positions 334 and 429 each coordinate a divalent metal cation.

This sequence belongs to the peptidase M24A family. Methionine aminopeptidase eukaryotic type 2 subfamily. Requires Co(2+) as cofactor. Zn(2+) serves as cofactor. The cofactor is Mn(2+). It depends on Fe(2+) as a cofactor.

Its subcellular location is the cytoplasm. The enzyme catalyses Release of N-terminal amino acids, preferentially methionine, from peptides and arylamides.. In terms of biological role, cotranslationally removes the N-terminal methionine from nascent proteins. The N-terminal methionine is often cleaved when the second residue in the primary sequence is small and uncharged (Met-Ala-, Cys, Gly, Pro, Ser, Thr, or Val). The protein is Methionine aminopeptidase 2 of Malassezia globosa (strain ATCC MYA-4612 / CBS 7966) (Dandruff-associated fungus).